We begin with the raw amino-acid sequence, 366 residues long: Probable neutral protease 2 homolog B (366 aa).

Residues 1 to 19 (MQVIVALAALSSLAAPALG) form the signal peptide. Positions 20-189 (FSIPRGVPVS…RGPRSRITKR (170 aa)) are excised as a propeptide. 3 disulfide bridges follow: cysteine 197–cysteine 267, cysteine 274–cysteine 292, and cysteine 306–cysteine 366. Zn(2+) is bound at residue histidine 317. Residue glutamate 318 is part of the active site. Zn(2+)-binding residues include histidine 321 and aspartate 332.

It belongs to the peptidase M35 family. The cofactor is Zn(2+).

Its subcellular location is the secreted. The catalysed reaction is Preferential cleavage of bonds with hydrophobic residues in P1'. Also 3-Asn-|-Gln-4 and 8-Gly-|-Ser-9 bonds in insulin B chain.. In terms of biological role, probable secreted metalloprotease that shows high activities on basic nuclear substrates such as histone and protamine. May be involved in virulence. This chain is Probable neutral protease 2 homolog B (NpII-B), found in Trichophyton rubrum (Athlete's foot fungus).